We begin with the raw amino-acid sequence, 266 residues long: 3-deoxy-manno-octulosonate cytidylyltransferase 1 (266 aa).

It belongs to the KdsB family.

Its subcellular location is the cytoplasm. The enzyme catalyses 3-deoxy-alpha-D-manno-oct-2-ulosonate + CTP = CMP-3-deoxy-beta-D-manno-octulosonate + diphosphate. Its pathway is nucleotide-sugar biosynthesis; CMP-3-deoxy-D-manno-octulosonate biosynthesis; CMP-3-deoxy-D-manno-octulosonate from 3-deoxy-D-manno-octulosonate and CTP: step 1/1. It participates in bacterial outer membrane biogenesis; lipopolysaccharide biosynthesis. Activates KDO (a required 8-carbon sugar) for incorporation into bacterial lipopolysaccharide in Gram-negative bacteria. This is 3-deoxy-manno-octulosonate cytidylyltransferase 1 from Paraburkholderia phytofirmans (strain DSM 17436 / LMG 22146 / PsJN) (Burkholderia phytofirmans).